Reading from the N-terminus, the 156-residue chain is Lipoprotein signal peptidase (156 aa).

4 consecutive transmembrane segments (helical) span residues 8–28 (IYIN…KWIL), 39–59 (VFFI…SILS), 67–87 (YFLL…MIKF), and 99–119 (SLIL…GFVI). Catalysis depends on residues Asp120 and Asp138. The helical transmembrane segment at 129 to 149 (WHFATFNIADFSIFIGMIMII) threads the bilayer.

The protein belongs to the peptidase A8 family.

It is found in the cell inner membrane. The catalysed reaction is Release of signal peptides from bacterial membrane prolipoproteins. Hydrolyzes -Xaa-Yaa-Zaa-|-(S,diacylglyceryl)Cys-, in which Xaa is hydrophobic (preferably Leu), and Yaa (Ala or Ser) and Zaa (Gly or Ala) have small, neutral side chains.. It functions in the pathway protein modification; lipoprotein biosynthesis (signal peptide cleavage). This protein specifically catalyzes the removal of signal peptides from prolipoproteins. This Buchnera aphidicola subsp. Schizaphis graminum (strain Sg) protein is Lipoprotein signal peptidase.